The following is a 122-amino-acid chain: Large ribosomal subunit protein uL14 (122 aa).

This sequence belongs to the universal ribosomal protein uL14 family. Part of the 50S ribosomal subunit. Forms a cluster with proteins L3 and L19. In the 70S ribosome, L14 and L19 interact and together make contacts with the 16S rRNA in bridges B5 and B8.

In terms of biological role, binds to 23S rRNA. Forms part of two intersubunit bridges in the 70S ribosome. The polypeptide is Large ribosomal subunit protein uL14 (Syntrophobacter fumaroxidans (strain DSM 10017 / MPOB)).